Consider the following 232-residue polypeptide: Octanoyltransferase (232 aa).

Residues 32-219 (NIIYDTLILL…SFKVFNFSSY (188 aa)) form the BPL/LPL catalytic domain. Residues 77–84 (RGGDITYH), 140–142 (AIG), and 153–155 (GFA) each bind substrate. Catalysis depends on Cys171, which acts as the Acyl-thioester intermediate.

Belongs to the LipB family.

The protein resides in the cytoplasm. It catalyses the reaction octanoyl-[ACP] + L-lysyl-[protein] = N(6)-octanoyl-L-lysyl-[protein] + holo-[ACP] + H(+). The protein operates within protein modification; protein lipoylation via endogenous pathway; protein N(6)-(lipoyl)lysine from octanoyl-[acyl-carrier-protein]: step 1/2. Functionally, catalyzes the transfer of endogenously produced octanoic acid from octanoyl-acyl-carrier-protein onto the lipoyl domains of lipoate-dependent enzymes. Lipoyl-ACP can also act as a substrate although octanoyl-ACP is likely to be the physiological substrate. The sequence is that of Octanoyltransferase from Dictyoglomus turgidum (strain DSM 6724 / Z-1310).